We begin with the raw amino-acid sequence, 1076 residues long: GPI inositol-deacylase A (1076 aa).

The chain crosses the membrane as a helical span at residues 3 to 23 (IATFPALAITALALVLWATVA). N-linked (GlcNAc...) asparagine glycosylation is found at Asn48 and Asn119. Residue Ser240 is part of the active site. Asn404 carries an N-linked (GlcNAc...) asparagine glycan. Transmembrane regions (helical) follow at residues 765 to 785 (FLGFYRVMFAIFPMFVFLCLL) and 815 to 835 (WILAGSCAIPFVPHVLVSLLY). Asn849 carries an N-linked (GlcNAc...) asparagine glycan. A run of 3 helical transmembrane segments spans residues 855 to 875 (FLGPVSLVIATGIVVVLHWLL), 877 to 897 (ILTLWVCQCYYMLGLAPIAPE), and 910 to 930 (FLLLLVFKIVPHQFAFMVAVL). Asn952 and Asn966 each carry an N-linked (GlcNAc...) asparagine glycan. The next 3 membrane-spanning stretches (helical) occupy residues 970–990 (SLLLLLVLLLPINAPTLVVWL), 1006–1026 (EVSAILPILLLVLTASRGIMI), and 1035–1055 (IYATFAFLAYFALFVLFHGVV).

This sequence belongs to the GPI inositol-deacylase family.

It localises to the endoplasmic reticulum membrane. Its function is as follows. Involved in inositol deacylation of GPI-anchored proteins which plays important roles in the quality control and ER-associated degradation of GPI-anchored proteins. The sequence is that of GPI inositol-deacylase A (BST1A) from Yarrowia lipolytica (strain CLIB 122 / E 150) (Yeast).